The primary structure comprises 258 residues: UPF0246 protein YPK_3600 (258 aa).

It belongs to the UPF0246 family.

The chain is UPF0246 protein YPK_3600 from Yersinia pseudotuberculosis serotype O:3 (strain YPIII).